The chain runs to 186 residues: Imidazoleglycerol-phosphate dehydratase (186 aa).

It belongs to the imidazoleglycerol-phosphate dehydratase family.

It localises to the cytoplasm. It carries out the reaction D-erythro-1-(imidazol-4-yl)glycerol 3-phosphate = 3-(imidazol-4-yl)-2-oxopropyl phosphate + H2O. The protein operates within amino-acid biosynthesis; L-histidine biosynthesis; L-histidine from 5-phospho-alpha-D-ribose 1-diphosphate: step 6/9. The protein is Imidazoleglycerol-phosphate dehydratase of Dictyoglomus thermophilum (strain ATCC 35947 / DSM 3960 / H-6-12).